The following is a 37-amino-acid chain: Photosystem II reaction center protein M (37 aa).

A helical transmembrane segment spans residues 7–27 (GFIAVLMFLAIPTAFLLIPYV).

The protein belongs to the PsbM family. As to quaternary structure, PSII is composed of 1 copy each of membrane proteins PsbA, PsbB, PsbC, PsbD, PsbE, PsbF, PsbH, PsbI, PsbJ, PsbK, PsbL, PsbM, PsbT, PsbX, PsbY, PsbZ, Psb30/Ycf12, at least 3 peripheral proteins of the oxygen-evolving complex and a large number of cofactors. It forms dimeric complexes.

It localises to the plastid. The protein resides in the chloroplast thylakoid membrane. Functionally, one of the components of the core complex of photosystem II (PSII). PSII is a light-driven water:plastoquinone oxidoreductase that uses light energy to abstract electrons from H(2)O, generating O(2) and a proton gradient subsequently used for ATP formation. It consists of a core antenna complex that captures photons, and an electron transfer chain that converts photonic excitation into a charge separation. This subunit is found at the monomer-monomer interface. This chain is Photosystem II reaction center protein M, found in Pinus koraiensis (Korean pine).